Consider the following 723-residue polypeptide: Cyclin-T2 (723 aa).

An interaction with MDFIC and MDFI region spans residues Met-1 to Ser-298. Residues Phe-12–Ile-147 enclose the Cyclin N-terminal domain. Positions Arg-250–Ser-298 are interaction with POLR2A. Composition is skewed to polar residues over residues Pro-297–Phe-307 and Asn-314–Ala-325. Disordered stretches follow at residues Pro-297 to Ala-325, Ser-340 to Gln-364, Ala-385 to Pro-428, and Ala-458 to Lys-645. Residues Asp-395–His-409 are compositionally biased toward basic and acidic residues. Residue Lys-404 forms a Glycyl lysine isopeptide (Lys-Gly) (interchain with G-Cter in SUMO2) linkage. A Phosphoserine modification is found at Ser-477. Composition is skewed to basic and acidic residues over residues Asp-489–Gly-503, Gly-517–Gly-543, and Ile-552–Ala-565. A compositionally biased stretch (basic residues) spans Asn-566–His-576. Ser-596 is subject to Phosphoserine. The span at Ser-631–Lys-645 shows a compositional bias: low complexity.

Belongs to the cyclin family. Cyclin C subfamily. Interacts with CDK9 to form P-TEFb. Interacts with POLR2A (via the C-terminal domain (CTD)); mediates transcriptional activity. Interacts with HEXIM1; mediates formation of a tripartite complex with KPNA2. Interacts with HEXIM2. Interacts with PKN1; enhances MYOD1-dependent transcription. P-TEFB complex interacts with RB1; promotes phosphorylation of RB1. P-TEFB complex interacts with MYOD1; promotes the transcriptional activity of MYOD1 through its CDK9-mediated phosphorylation. Interacts with MDFI and MDFIC. As to expression, highly expressed in all phases of skeletal muscle differentiation, particularly in later stages. Highly expressed in skeletal muscle. Significantly expressed in heart, brain, kidney, liver, testis, and pancreas.

It is found in the cytoplasm. Its subcellular location is the perinuclear region. The protein resides in the nucleus. Functionally, regulatory subunit of the cyclin-dependent kinase pair (CDK9/cyclin T) complex, also called positive transcription elongation factor B (P-TEFB), which is proposed to facilitate the transition from abortive to production elongation by phosphorylating the CTD (carboxy-terminal domain) of the large subunit of RNA polymerase II (RNAP II). The activity of this complex is regulated by binding with 7SK snRNA. Plays a role during muscle differentiation; P-TEFB complex interacts with MYOD1; this tripartite complex promotes the transcriptional activity of MYOD1 through its CDK9-mediated phosphorylation and binds the chromatin of promoters and enhancers of muscle-specific genes; this event correlates with hyperphosphorylation of the CTD domain of RNA pol II. In addition, enhances MYOD1-dependent transcription through interaction with PKN1. Involved in early embryo development. This Mus musculus (Mouse) protein is Cyclin-T2.